The following is a 213-amino-acid chain: MKLEGRRIKGLYLVTEDYSRKNFFNIIEEAIIGGVDIVQYRDKSNPRSVRLDVARKVKQICNRYDILFFIDDDVQLAIEVQADGVHIGKDDMPLPDARRIFDGLIGYSTYGDREMAIFAEKNGADYVAFGPFFHTDTKKDADVYDIHVLEGIHKYIRIPVFVIGGINISNIRTFSGYGIDGVAVVSAIFSDPDPERAARELKAALYNYVLSSA.

4-amino-2-methyl-5-(diphosphooxymethyl)pyrimidine contacts are provided by residues 39-43 (QYRDK) and D71. Positions 72 and 91 each coordinate Mg(2+). S108 contacts 4-amino-2-methyl-5-(diphosphooxymethyl)pyrimidine. Residue 135–137 (TDT) participates in 2-[(2R,5Z)-2-carboxy-4-methylthiazol-5(2H)-ylidene]ethyl phosphate binding. A 4-amino-2-methyl-5-(diphosphooxymethyl)pyrimidine-binding site is contributed by K138. 2-[(2R,5Z)-2-carboxy-4-methylthiazol-5(2H)-ylidene]ethyl phosphate-binding positions include G165 and 185–186 (VS).

The protein belongs to the thiamine-phosphate synthase family. The cofactor is Mg(2+).

The catalysed reaction is 2-[(2R,5Z)-2-carboxy-4-methylthiazol-5(2H)-ylidene]ethyl phosphate + 4-amino-2-methyl-5-(diphosphooxymethyl)pyrimidine + 2 H(+) = thiamine phosphate + CO2 + diphosphate. The enzyme catalyses 2-(2-carboxy-4-methylthiazol-5-yl)ethyl phosphate + 4-amino-2-methyl-5-(diphosphooxymethyl)pyrimidine + 2 H(+) = thiamine phosphate + CO2 + diphosphate. It carries out the reaction 4-methyl-5-(2-phosphooxyethyl)-thiazole + 4-amino-2-methyl-5-(diphosphooxymethyl)pyrimidine + H(+) = thiamine phosphate + diphosphate. Its pathway is cofactor biosynthesis; thiamine diphosphate biosynthesis; thiamine phosphate from 4-amino-2-methyl-5-diphosphomethylpyrimidine and 4-methyl-5-(2-phosphoethyl)-thiazole: step 1/1. In terms of biological role, condenses 4-methyl-5-(beta-hydroxyethyl)thiazole monophosphate (THZ-P) and 2-methyl-4-amino-5-hydroxymethyl pyrimidine pyrophosphate (HMP-PP) to form thiamine monophosphate (TMP). This chain is Thiamine-phosphate synthase, found in Thermoplasma acidophilum (strain ATCC 25905 / DSM 1728 / JCM 9062 / NBRC 15155 / AMRC-C165).